Reading from the N-terminus, the 537-residue chain is Efflux pump ustT (537 aa).

The segment covering Met-1–Ala-25 has biased composition (basic and acidic residues). The disordered stretch occupies residues Met-1–Glu-50. Asn-47 is a glycosylation site (N-linked (GlcNAc...) asparagine). A run of 8 helical transmembrane segments spans residues Pro-71 to Leu-91, Trp-104 to Met-124, Gly-137 to Leu-157, Met-162 to Gly-182, Trp-193 to Val-213, Leu-236 to Gly-256, Ile-266 to Leu-286, and Phe-304 to Ile-324. Asn-333 carries an N-linked (GlcNAc...) asparagine glycan. Helical transmembrane passes span Ala-339–Gly-359, Leu-363–Gly-383, Trp-397–Leu-417, and Thr-430–Gly-450. Asn-501 carries an N-linked (GlcNAc...) asparagine glycan. The chain crosses the membrane as a helical span at residues Thr-507–Trp-527.

The protein belongs to the major facilitator superfamily. TCR/Tet family.

The protein resides in the cell membrane. Functionally, efflux pump; part of the gene cluster that mediates the biosynthesis of ustilaginoidins, dimeric gamma-naphthopyrones isolated from different fungal species. The protein is Efflux pump ustT of Ustilaginoidea virens (Rice false smut fungus).